We begin with the raw amino-acid sequence, 119 residues long: Holo-[acyl-carrier-protein] synthase (119 aa).

Mg(2+) is bound by residues D2 and E51.

The protein belongs to the P-Pant transferase superfamily. AcpS family. It depends on Mg(2+) as a cofactor.

The protein localises to the cytoplasm. The catalysed reaction is apo-[ACP] + CoA = holo-[ACP] + adenosine 3',5'-bisphosphate + H(+). In terms of biological role, transfers the 4'-phosphopantetheine moiety from coenzyme A to a Ser of acyl-carrier-protein. In Chlorobium luteolum (strain DSM 273 / BCRC 81028 / 2530) (Pelodictyon luteolum), this protein is Holo-[acyl-carrier-protein] synthase.